A 259-amino-acid chain; its full sequence is Cell division protein DivIB (259 aa).

Topologically, residues 1-27 are cytoplasmic; sequence MADGKVIDIEQKVPDFREQRRRKSRRR. The helical transmembrane segment at 28-45 threads the bilayer; sequence LVLYISILAFFLLFVYYF. Residues 46-259 lie on the Extracellular side of the membrane; it reads QSDYSTVGHV…QEEEEIEIEE (214 aa). Residues 50–118 form the POTRA domain; that stretch reads STVGHVDVYG…RSITLYVDEY (69 aa).

The protein belongs to the FtsQ/DivIB family. DivIB subfamily.

The protein resides in the cell membrane. Functionally, cell division protein that may be involved in stabilizing or promoting the assembly of the division complex. This is Cell division protein DivIB from Bacillus selenitireducens (strain ATCC 700615 / DSM 15326 / MLS10).